The chain runs to 1034 residues: MKEDKVLILRTCANNMADHGGIIWPLSGIVECKYWKPVKGFENGLTGLIWGKGSDSPLSLHADARWVVAEVDADECIAIETHGWIKFPRAEVLHVGTKTSAMQFILHHRADYVACTEMQAGPGAPDVTSEVKAGNRSLPVTDDIDATIESGSTQPTQTIEIATYGSTLSGTHQSQLIAGYGSTETAGDSSTLIAGYGSTGTAGSDSTLVAGYGSTQTAGEESSQMAGYGSTQTGMKGSDLTAGYGSTGTAGDDSSLIAGYGSTQTAGEDSSLTAGYGSTQTAQKGSDLTAGYGSTGTAGADSSLIAGYGSTQTAGEESTQTAGYGSTQTAQKGSDLTAGYGSTGTAGDDSSLIAGYGSTQTAGEDSSLTAGYGSTQTAQKGSDLTAGYGSTGTAGADSSLIAGYGSTQTAGEESTQTAGYGSTQTAQKGSDLTAGYGSTGTAGDDSSLIAGYGSTQTAGEDSSLTAGYGSTQTAQKGSDLTAGYGSTSTAGYESSLIAGYGSTQTAGYGSTLTAGYGSTQTAQNESDLITGYGSTSTAGANSSLIAGYGSTQTASYNSVLTAGYGSTQTAREGSDLTAGYGSTQTAQENSDLTTGYGSTSTAGYDSSLIAGYGSTQTAGYHSILTAGYGSTQTAQERSDLTTGYGSTSTAGADSSLIAGYGSTQTAGYNSILTAGYGSTQTAQENSDLTTGYGSTSTAGYESSLIAGYGSTQTASFKSTLMAGYGSSQTAREQSSLTAGYGSTSMAGYDSSLIAGYGSTQTAGYQSTLTAGYGSTQTAEHSSTLTAGYGSTATAGADSSLIAGYGSSLTSGIRSFLTAGYGSTLISGLRSVLTAGYGSSLISGRRSSLTAGYGSNQIASHRSSLIAGPESTQITGNRSMLIAGKGSSQTAGYRSTLISGADSVQMAGERGKLIAGADSTQTAGDRSKLLAGNNSYLTAGDRSKLTAGNDCILMAGDRSKLTAGINSILTAGCRSKLIGSNGSTLTAGENSVLIFRCWDGKRYTNVVAKTGKGGIEADMPYQMDEDNNIVNKPEE.

The interval 162–993 is octapeptide periodicity; it reads ATYGSTLSGT…LTAGENSVLI (832 aa). Disordered regions lie at residues 260–287, 311–342, 356–383, 407–438, 452–480, and 570–597; these read YGSTQTAGEDSSLTAGYGSTQTAQKGSD, TQTAGEESTQTAGYGSTQTAQKGSDLTAGYGS, YGSTQTAGEDSSLTAGYGSTQTAQKGSDL, and AREGSDLTAGYGSTQTAQENSDLTTGYG. 6 stretches are compositionally biased toward polar residues: residues 261 to 286, 311 to 334, 357 to 382, 407 to 430, 453 to 480, and 580 to 592; these read GSTQTAGEDSSLTAGYGSTQTAQKGS, TQTAGEESTQTAGYGSTQTAQKGS, GSTQTAGEDSSLTAGYGSTQTAQKGSDL, and YGSTQTAQENSDL.

The protein belongs to the bacterial ice nucleation protein family.

It localises to the cell outer membrane. In terms of biological role, ice nucleation proteins enable bacteria to nucleate crystallization in supercooled water. The polypeptide is Ice nucleation protein InaU (inaU) (Pantoea ananas (Erwinia uredovora)).